A 477-amino-acid polypeptide reads, in one-letter code: MAAAFSSDGEAVLRRTLDPAAAAPRGDKDEFYEVDRAAAFVRDGGFRKVALQFPDALLADAAAVAARMEEVTGAEMYVLGDTTYGSCCVDEVAAEHVSAGAVVHYGPACLSPCRKLPVLHVFGRQPLDVGRCAEVFRELYPERQSRVVVLSDVVYAHAMGELEKQLCHEYPNIIFSEVVCGDAPSPTLPGEVRQFGRRFHMEAAEELQDCSMFYVGAEGLALTSFMLTWNRFPFSSFDPATGHGRRETLNVNRALMRRLYLVERARDAHVVGILVGTLGVAGYLDVLEHLHQLVRRAGKRSYTLSVGKPNPAKLANFLEVDIFVLVACAQNSLLDSSEFYRPIVTPYELELACNPAREWTGNYLTDFRDLLPGACAHIELPPAVPAAEAIPDVSLITGEMRATHLCDPLAPQPPSSTTLACRDQTRALAEMSPAATFLESRSWRGLEQQLGKTAVSKAVQGRRGIAIAYEDEGREQS.

Positions 88, 109, and 328 each coordinate [4Fe-4S] cluster.

The protein belongs to the DPH1/DPH2 family. DPH2 subfamily. In terms of assembly, component of the 2-(3-amino-3-carboxypropyl)histidine synthase complex composed of DPH1, DPH2, DPH3 and a NADH-dependent reductase. The cofactor is [4Fe-4S] cluster.

It functions in the pathway protein modification; peptidyl-diphthamide biosynthesis. Functionally, required for the first step of diphthamide biosynthesis, a post-translational modification of histidine which occurs in elongation factor 2. DPH1 and DPH2 transfer a 3-amino-3-carboxypropyl (ACP) group from S-adenosyl-L-methionine (SAM) to a histidine residue, the reaction is assisted by a reduction system comprising DPH3 and a NADH-dependent reductase. Facilitates the reduction of the catalytic iron-sulfur cluster found in the DPH1 subunit. In Gallus gallus (Chicken), this protein is 2-(3-amino-3-carboxypropyl)histidine synthase subunit 2 (DPH2).